Consider the following 184-residue polypeptide: MITMENIVRDGHPALRETAEPVELPPTDAEKQQLADMIEFVKNSQNPELAEKYKLRPGVGLAAPQINIKKRMIAVHAEDASGKLYSYALFNPKIVSHSVEKSYLTSGEGCLSVDEAIPGYVPRYARIRVKGTTLEGENIDIRLKGFPAIVFQHEIDHLNGVMFYDHIDKENPFKEPENAIAIER.

2 residues coordinate Fe cation: C110 and H153. E154 is a catalytic residue. H157 is a Fe cation binding site.

This sequence belongs to the polypeptide deformylase family. Requires Fe(2+) as cofactor.

It catalyses the reaction N-terminal N-formyl-L-methionyl-[peptide] + H2O = N-terminal L-methionyl-[peptide] + formate. Removes the formyl group from the N-terminal Met of newly synthesized proteins. Requires at least a dipeptide for an efficient rate of reaction. N-terminal L-methionine is a prerequisite for activity but the enzyme has broad specificity at other positions. This Bacillus subtilis (strain 168) protein is Peptide deformylase 2 (defB).